The primary structure comprises 184 residues: Latex serine proteinase inhibitor (184 aa).

The cysteines at positions 45 and 89 are disulfide-linked. N-linked (GlcNAc...) asparagine glycans are attached at residues asparagine 84 and asparagine 90. The cysteines at positions 142 and 153 are disulfide-linked.

It belongs to the protease inhibitor I3 (leguminous Kunitz-type inhibitor) family.

It localises to the secreted. Its subcellular location is the extracellular space. This Carica papaya (Papaya) protein is Latex serine proteinase inhibitor.